Reading from the N-terminus, the 419-residue chain is UDP-N-acetylglucosamine 1-carboxyvinyltransferase (419 aa).

22–23 (KN) contacts phosphoenolpyruvate. Residue arginine 91 coordinates UDP-N-acetyl-alpha-D-glucosamine. Cysteine 115 functions as the Proton donor in the catalytic mechanism. At cysteine 115 the chain carries 2-(S-cysteinyl)pyruvic acid O-phosphothioketal. Residues 120–124 (RPVDL), 160–163 (KVSV), aspartate 305, and valine 327 contribute to the UDP-N-acetyl-alpha-D-glucosamine site.

The protein belongs to the EPSP synthase family. MurA subfamily.

It localises to the cytoplasm. It catalyses the reaction phosphoenolpyruvate + UDP-N-acetyl-alpha-D-glucosamine = UDP-N-acetyl-3-O-(1-carboxyvinyl)-alpha-D-glucosamine + phosphate. It functions in the pathway cell wall biogenesis; peptidoglycan biosynthesis. Functionally, cell wall formation. Adds enolpyruvyl to UDP-N-acetylglucosamine. The protein is UDP-N-acetylglucosamine 1-carboxyvinyltransferase of Shigella boydii serotype 18 (strain CDC 3083-94 / BS512).